A 284-amino-acid chain; its full sequence is Hemin import ATP-binding protein HmuV (284 aa).

The ABC transporter domain occupies 33 to 266 (LGARHLSKSY…KLLSDVYSYE (234 aa)). 65-72 (GPNGAGKS) contributes to the ATP binding site.

This sequence belongs to the ABC transporter superfamily. Heme (hemin) importer (TC 3.A.1.14.5) family. The complex is composed of two ATP-binding proteins (HmuV), two transmembrane proteins (HmuU) and a solute-binding protein (HmuT).

Its subcellular location is the cell membrane. In terms of biological role, part of the ABC transporter complex HmuTUV involved in hemin import. Responsible for energy coupling to the transport system. The protein is Hemin import ATP-binding protein HmuV of Thermobifida fusca (strain YX).